We begin with the raw amino-acid sequence, 179 residues long: Probable WRKY transcription factor 24 (179 aa).

A DNA-binding region (WRKY) is located at residues 92–157; it reads SDDDVLDDGY…YEGVHNHPCE (66 aa).

The protein belongs to the WRKY group II-c family.

Its subcellular location is the nucleus. Transcription factor. Interacts specifically with the W box (5'-(T)TGAC[CT]-3'), a frequently occurring elicitor-responsive cis-acting element. This Arabidopsis thaliana (Mouse-ear cress) protein is Probable WRKY transcription factor 24 (WRKY24).